A 90-amino-acid polypeptide reads, in one-letter code: Defensin-like protein 293 (90 aa).

A signal peptide spans 1–26 (MTSRAKSLFIFFFLISCTFMLLETDA). Cystine bridges form between Cys-63–Cys-83, Cys-69–Cys-88, and Cys-75–Cys-90.

The protein belongs to the DEFL family.

It is found in the secreted. This is Defensin-like protein 293 from Arabidopsis thaliana (Mouse-ear cress).